The following is a 432-amino-acid chain: Putative D-alanyl-D-alanine carboxypeptidase (432 aa).

A helical; Signal-anchor membrane pass occupies residues 7 to 25; the sequence is ATVLLTFSLSAFAVEYPVL.

This sequence belongs to the peptidase S12 family. YfeW subfamily.

Its subcellular location is the cell inner membrane. The enzyme catalyses Preferential cleavage: (Ac)2-L-Lys-D-Ala-|-D-Ala. Also transpeptidation of peptidyl-alanyl moieties that are N-acyl substituents of D-alanine.. This is Putative D-alanyl-D-alanine carboxypeptidase from Salmonella typhimurium (strain LT2 / SGSC1412 / ATCC 700720).